Reading from the N-terminus, the 288-residue chain is Putative hydrolase LipZ (288 aa).

Belongs to the AB hydrolase superfamily.

In Mycobacterium tuberculosis (strain CDC 1551 / Oshkosh), this protein is Putative hydrolase LipZ.